A 113-amino-acid chain; its full sequence is Hydrogenase maturation factor HypA (113 aa).

A Ni(2+)-binding site is contributed by H2. The Zn(2+) site is built by C73, C76, C89, and C92.

The protein belongs to the HypA/HybF family.

Functionally, involved in the maturation of [NiFe] hydrogenases. Required for nickel insertion into the metal center of the hydrogenase. This chain is Hydrogenase maturation factor HypA, found in Prosthecochloris aestuarii (strain DSM 271 / SK 413).